Reading from the N-terminus, the 141-residue chain is Large ribosomal subunit protein uL16 (141 aa).

The protein belongs to the universal ribosomal protein uL16 family. As to quaternary structure, part of the 50S ribosomal subunit.

Functionally, binds 23S rRNA and is also seen to make contacts with the A and possibly P site tRNAs. This chain is Large ribosomal subunit protein uL16, found in Campylobacter concisus (strain 13826).